The primary structure comprises 290 residues: Oxaloacetate decarboxylase 2 (290 aa).

S50 contacts substrate. Residue D88 coordinates Mg(2+). The substrate site is built by R159 and H235.

This sequence belongs to the isocitrate lyase/PEP mutase superfamily. Oxaloacetate decarboxylase family. Homotetramer; dimer of dimers. It depends on Mg(2+) as a cofactor.

The enzyme catalyses oxaloacetate + H(+) = pyruvate + CO2. Catalyzes the decarboxylation of oxaloacetate into pyruvate. Seems to play a role in maintaining cellular concentrations of bicarbonate and pyruvate. The polypeptide is Oxaloacetate decarboxylase 2 (Pseudomonas fluorescens (strain Pf0-1)).